The sequence spans 345 residues: NADH-quinone oxidoreductase subunit H (345 aa).

Helical transmembrane passes span 13 to 33 (VIILAQTLAVVAFVMISLLFL), 84 to 104 (FILAPLTSFVLAMIAWAVIPF), 115 to 135 (VAILYVFAVSSLEVYGVIMGG), 161 to 181 (IGLIIIGVILSTGSMNFGDIV), 190 to 210 (LFNWYWLPHFPMVFLFFISCL), 248 to 268 (YIAIFLMCALTSLLFFGGWLS), 277 to 297 (PLWMVAKMAFFFFLFAMVKAI), and 309 to 329 (LGWKVFLPFSLIWVVFVAFAA).

Belongs to the complex I subunit 1 family. As to quaternary structure, NDH-1 is composed of 14 different subunits. Subunits NuoA, H, J, K, L, M, N constitute the membrane sector of the complex.

The protein resides in the cell inner membrane. It carries out the reaction a quinone + NADH + 5 H(+)(in) = a quinol + NAD(+) + 4 H(+)(out). Its function is as follows. NDH-1 shuttles electrons from NADH, via FMN and iron-sulfur (Fe-S) centers, to quinones in the respiratory chain. The immediate electron acceptor for the enzyme in this species is believed to be ubiquinone. Couples the redox reaction to proton translocation (for every two electrons transferred, four hydrogen ions are translocated across the cytoplasmic membrane), and thus conserves the redox energy in a proton gradient. This subunit may bind ubiquinone. This is NADH-quinone oxidoreductase subunit H from Ruegeria sp. (strain TM1040) (Silicibacter sp.).